The chain runs to 560 residues: DNA ligase B (560 aa).

K124 functions as the N6-AMP-lysine intermediate in the catalytic mechanism.

Belongs to the NAD-dependent DNA ligase family. LigB subfamily.

It catalyses the reaction NAD(+) + (deoxyribonucleotide)n-3'-hydroxyl + 5'-phospho-(deoxyribonucleotide)m = (deoxyribonucleotide)n+m + AMP + beta-nicotinamide D-nucleotide.. Catalyzes the formation of phosphodiester linkages between 5'-phosphoryl and 3'-hydroxyl groups in double-stranded DNA using NAD as a coenzyme and as the energy source for the reaction. The protein is DNA ligase B of Escherichia coli O139:H28 (strain E24377A / ETEC).